The following is a 262-amino-acid chain: MATLLEKTRKITAILQDGVTDLQQELPYNSMTERLANVIDCNACVINTKGELLGYSLPYNTNNDRVDQFFYDRKLPDEYVRAAVRIYDTMANVPVDRPLAIFPEESLGDFPKGVTTLAPIYGSGMRLGTFIMWREDGEFTDDDLVLVELATTVIGVQLSNLKLEQMEENIRKDTMATMAVNTLSYSEMKAVKAIIEELDGEEGHVIASVIADKIGITRSVIVNALRKLESAGVIESRSLGMKGTYLKVLNTGLFDKLAGRNF.

The segment at 1 to 159 (MATLLEKTRK…ATTVIGVQLS (159 aa)) is GAF domain. Positions 207-226 (ASVIADKIGITRSVIVNALR) form a DNA-binding region, H-T-H motif.

Belongs to the CodY family.

It localises to the cytoplasm. In terms of biological role, DNA-binding global transcriptional regulator which is involved in the adaptive response to starvation and acts by directly or indirectly controlling the expression of numerous genes in response to nutrient availability. During rapid exponential growth, CodY is highly active and represses genes whose products allow adaptation to nutrient depletion. The polypeptide is Global transcriptional regulator CodY (Lactococcus lactis subsp. lactis (strain IL1403) (Streptococcus lactis)).